Reading from the N-terminus, the 410-residue chain is Zinc finger TRAF-type-containing protein 1 (410 aa).

A compositionally biased stretch (gly residues) spans 1–13; it reads MSGAEEAGGGGPA. A disordered region spans residues 1-22; it reads MSGAEEAGGGGPAAGPAGSVPA. The segment at 117–162 adopts an RING-type; degenerate zinc-finger fold; it reads CTVCLDLPKASVYQCTNGHLMCAGCFIHLLADARLKEEQATCPNCR. The TRAF-type zinc finger occupies 158 to 231; sequence CPNCRCEISK…PWHGPFHELT (74 aa).

It belongs to the ZFTRAF1 family. Interacts with LGALS3.

The protein localises to the cytoplasm. Its subcellular location is the perinuclear region. The polypeptide is Zinc finger TRAF-type-containing protein 1 (Bos taurus (Bovine)).